We begin with the raw amino-acid sequence, 94 residues long: Aspartyl/glutamyl-tRNA(Asn/Gln) amidotransferase subunit C (94 aa).

The protein belongs to the GatC family. Heterotrimer of A, B and C subunits.

It catalyses the reaction L-glutamyl-tRNA(Gln) + L-glutamine + ATP + H2O = L-glutaminyl-tRNA(Gln) + L-glutamate + ADP + phosphate + H(+). The enzyme catalyses L-aspartyl-tRNA(Asn) + L-glutamine + ATP + H2O = L-asparaginyl-tRNA(Asn) + L-glutamate + ADP + phosphate + 2 H(+). Allows the formation of correctly charged Asn-tRNA(Asn) or Gln-tRNA(Gln) through the transamidation of misacylated Asp-tRNA(Asn) or Glu-tRNA(Gln) in organisms which lack either or both of asparaginyl-tRNA or glutaminyl-tRNA synthetases. The reaction takes place in the presence of glutamine and ATP through an activated phospho-Asp-tRNA(Asn) or phospho-Glu-tRNA(Gln). The protein is Aspartyl/glutamyl-tRNA(Asn/Gln) amidotransferase subunit C of Solidesulfovibrio magneticus (strain ATCC 700980 / DSM 13731 / RS-1) (Desulfovibrio magneticus).